The sequence spans 376 residues: Arsenite methyltransferase (376 aa).

Residues S47 and S336 each carry the phosphoserine modification. Residues 354-363 show a composition bias toward basic and acidic residues; the sequence is SDKMKPRHAP. Residues 354-376 form a disordered region; that stretch reads SDKMKPRHAPEGTGGCCGKRKNC.

It belongs to the methyltransferase superfamily. Arsenite methyltransferase family.

The protein resides in the cytoplasm. The protein localises to the cytosol. The enzyme catalyses arsenic triglutathione + [thioredoxin]-dithiol + S-adenosyl-L-methionine + 2 H2O = methylarsonous acid + [thioredoxin]-disulfide + 3 glutathione + S-adenosyl-L-homocysteine + H(+). It catalyses the reaction arsenic triglutathione + 2 [thioredoxin]-dithiol + 2 S-adenosyl-L-methionine + H2O = dimethylarsinous acid + 2 [thioredoxin]-disulfide + 3 glutathione + 2 S-adenosyl-L-homocysteine + 2 H(+). The catalysed reaction is arsenic triglutathione + 3 [thioredoxin]-dithiol + 3 S-adenosyl-L-methionine = trimethylarsine + 3 [thioredoxin]-disulfide + 3 glutathione + 3 S-adenosyl-L-homocysteine + 3 H(+). Functionally, catalyzes the transfer of a methyl group from AdoMet to trivalent arsenicals producing methylated and dimethylated arsenicals. It methylates arsenite to form methylarsonate, Me-AsO(3)H(2), which is reduced by methylarsonate reductase to methylarsonite, Me-As(OH)2. Methylarsonite is also a substrate and it is converted into the much less toxic compound dimethylarsinate (cacodylate), Me(2)As(O)-OH. In Mus musculus (Mouse), this protein is Arsenite methyltransferase (As3mt).